A 371-amino-acid chain; its full sequence is Chaperone protein DnaJ (371 aa).

The 66-residue stretch at 5 to 70 (CYYEILNISK…SKRSRYDQFG (66 aa)) folds into the J domain. A CR-type zinc finger spans residues 127–204 (GVEKEITIPR…CYGNGKVKKQ (78 aa)). The Zn(2+) site is built by Cys-140, Cys-143, Cys-156, Cys-159, Cys-178, Cys-181, Cys-192, and Cys-195. CXXCXGXG motif repeat units follow at residues 140-147 (CDSCDGTG), 156-163 (CHACHGQG), 178-185 (CPVCNGTG), and 192-199 (CDACYGNG).

This sequence belongs to the DnaJ family. As to quaternary structure, homodimer. Requires Zn(2+) as cofactor.

It is found in the cytoplasm. Participates actively in the response to hyperosmotic and heat shock by preventing the aggregation of stress-denatured proteins and by disaggregating proteins, also in an autonomous, DnaK-independent fashion. Unfolded proteins bind initially to DnaJ; upon interaction with the DnaJ-bound protein, DnaK hydrolyzes its bound ATP, resulting in the formation of a stable complex. GrpE releases ADP from DnaK; ATP binding to DnaK triggers the release of the substrate protein, thus completing the reaction cycle. Several rounds of ATP-dependent interactions between DnaJ, DnaK and GrpE are required for fully efficient folding. Also involved, together with DnaK and GrpE, in the DNA replication of plasmids through activation of initiation proteins. The sequence is that of Chaperone protein DnaJ from Francisella tularensis subsp. holarctica (strain LVS).